The primary structure comprises 938 residues: Auxilin (938 aa).

A disordered region spans residues 19–41 (AAAGENRMKDSENKGASSPDMEP). Tandem repeats lie at residues 61 to 64 (NLKD), 65 to 68 (NLKD), and 69 to 72 (TLKD). Positions 61-72 (NLKDNLKDTLKD) are 3 X 4 AA approximate tandem repeats. The Phosphatase tensin-type domain maps to 80–247 (SVSSYTKGDL…GYMCDLLADK (168 aa)). Phosphoserine is present on Ser-137. The active-site Phosphocysteine intermediate is the Cys-189. The C2 tensin-type domain maps to 253–391 (FKPLTIKAIT…FQVTLDIEVQ (139 aa)). The SH3-binding signature appears at 434-442 (PADLPPDHP). The disordered stretch occupies residues 467-801 (EEDHAALVNQ…GKGSTNLEGK (335 aa)). Phosphoserine is present on residues Ser-478 and Ser-481. The span at 531-548 (DVSTNFSSLAAPPSNSEL) shows a compositional bias: polar residues. A compositionally biased stretch (low complexity) spans 559–569 (TGPAQAGQAGV). 2 stretches are compositionally biased toward polar residues: residues 579 to 596 (VSAQ…SASP) and 624 to 654 (FLNT…TPAV). The residue at position 595 (Ser-595) is a Phosphoserine. Residues 679–694 (SAATSPTGSSHGTPTH) show a composition bias toward low complexity. A compositionally biased stretch (polar residues) spans 754–781 (NWQQTQSKPQSSMPHSSPQNRPNYNVSF). In terms of domain architecture, J spans 874–938 (TKWKPVGMAD…FENQGQKPLY (65 aa)).

Forms a complex composed of HSPA8, CLTC and DNAJC6. Interacts with HSPA8/HSC70 in an ATP-dependent manner; this interaction stimulates the HSPA8's ATPase activity. Interacts with CLTC; this interaction produces a local change in heavy-chain contacts, creating a detectable global distortion of the clathrin coat. Interacts with AP2A2. Interacts with DNM1(GTP-bound form); this interaction allows clathrin-coated vesicle (CCV) formation at the plasma membrane. The N-terminus is blocked. In terms of processing, phosphorylation at Ser-595 modulates its ability to bind CLTC and therefore the synaptic vesicle endocytosis (SVE).

The protein localises to the cytoplasmic vesicle. It localises to the clathrin-coated vesicle. May act as a protein phosphatase and/or a lipid phosphatase. Co-chaperone that recruits HSPA8/HSC70 to clathrin-coated vesicles (CCVs) and promotes the ATP-dependent dissociation of clathrin from CCVs and participates in clathrin-mediated endocytosis of synaptic vesicles and their recycling and also in intracellular trafficking. Firstly, binds tightly to the clathrin cages, at a ratio of one DNAJC6 per clathrin triskelion. The HSPA8:ATP complex then binds to the clathrin-auxilin cage, initially at a ratio of one HSPA8 per triskelion leading to ATP hydrolysis stimulation and causing a conformational change in the HSPA8. This cycle is repeated three times to drive to a complex containing the clathrin-auxilin cage associated to three HSPA8:ADP complex. The ATP hydrolysis of the third HSPA8:ATP complex leads to a concerted dismantling of the cage into component triskelia. Then, dissociates from the released triskelia and be recycled to initiate another cycle of HSPA8's recruitment. Also acts during the early steps of clathrin-coated vesicle (CCV) formation through its interaction with the GTP bound form of DNM1. In Mus musculus (Mouse), this protein is Auxilin.